The sequence spans 130 residues: Small ribosomal subunit protein uS8 (130 aa).

It belongs to the universal ribosomal protein uS8 family. In terms of assembly, part of the 30S ribosomal subunit. Contacts proteins S5 and S12.

One of the primary rRNA binding proteins, it binds directly to 16S rRNA central domain where it helps coordinate assembly of the platform of the 30S subunit. This is Small ribosomal subunit protein uS8 from Klebsiella pneumoniae (strain 342).